The following is a 73-amino-acid chain: Cytochrome b559 subunit alpha (73 aa).

The helical transmembrane segment at Ile-21 to Trp-35 threads the bilayer. His-23 provides a ligand contact to heme.

The protein belongs to the PsbE/PsbF family. As to quaternary structure, heterodimer of an alpha subunit and a beta subunit. PSII is composed of 1 copy each of membrane proteins PsbA, PsbB, PsbC, PsbD, PsbE, PsbF, PsbH, PsbI, PsbJ, PsbK, PsbL, PsbM, PsbT, PsbY, PsbZ, Psb30/Ycf12, at least 3 peripheral proteins of the oxygen-evolving complex and a large number of cofactors. It forms dimeric complexes. It depends on heme b as a cofactor.

The protein localises to the plastid. Its subcellular location is the chloroplast thylakoid membrane. This b-type cytochrome is tightly associated with the reaction center of photosystem II (PSII). PSII is a light-driven water:plastoquinone oxidoreductase that uses light energy to abstract electrons from H(2)O, generating O(2) and a proton gradient subsequently used for ATP formation. It consists of a core antenna complex that captures photons, and an electron transfer chain that converts photonic excitation into a charge separation. This is Cytochrome b559 subunit alpha from Bigelowiella natans (Pedinomonas minutissima).